A 412-amino-acid polypeptide reads, in one-letter code: Poly-beta-1,6-N-acetyl-D-glucosamine synthase (412 aa).

The next 4 helical transmembrane spans lie at 7–28, 298–320, 332–354, and 364–386; these read LLFY…YFFI, IASI…TANI, IFFF…ALFI, and VGLI…VVIM.

Belongs to the glycosyltransferase 2 family.

Its subcellular location is the cell membrane. Its function is as follows. N-acetylglucosaminyltransferase that catalyzes the polymerization of single monomer units of UDP-N-acetylglucosamine to produce the linear homomer poly-beta-1,6-N-acetyl-D-glucosamine (PNAG, also referred to as PIA), a biofilm adhesin polysaccharide. Requires IcaD for full activity. This Staphylococcus epidermidis protein is Poly-beta-1,6-N-acetyl-D-glucosamine synthase (icaA).